Here is a 353-residue protein sequence, read N- to C-terminus: MDLVVEPNLHSLINSSTHKWIFVGGKGGVGKTTSSCSIAIQMAQSQPHKQFLLISTDPAHNLSDAFGEKFGKDARRVTGMNNLSCMEIDPSAALKDMNDMAVSQANENGAQGDDGLGGLLQGGALAELTGSIPGIDEALSFMEVMKHIKNQEKGEGERYDTVIFDTAPTGHTLRFLQLPNTLSKLLEKFGEITGRLGPMLNSLAGAGNVDISTKLNQLKESVETIKDQFTNPDLTTFVCVCISEFLSLYETERLIQELISYDMDVNSIIVNQLLFADDDQEHNCKRCQARWKMQKKYLDQIDELYEDFHVVKMPLCAGEIRGLENLRKFSRFLNKEYNPAMDNKIIYELENKK.

Residue 26–33 (KGGVGKTT) coordinates ATP. The active site involves aspartate 57. Glutamate 244 and asparagine 271 together coordinate ATP. Residues cysteine 284 and cysteine 287 each contribute to the Zn(2+) site.

Belongs to the arsA ATPase family. Homodimer. Component of the Golgi to ER traffic (GET) complex, which is composed of GET1, GET2 and GET3. Within the complex, GET1 and GET2 form a heterotetramer which is stabilized by phosphatidylinositol binding and which binds to the GET3 homodimer. Interacts with the chloride channel protein GEF1.

It localises to the cytoplasm. The protein resides in the endoplasmic reticulum. It is found in the golgi apparatus. ATPase required for the post-translational delivery of tail-anchored (TA) proteins to the endoplasmic reticulum. Recognizes and selectively binds the transmembrane domain of TA proteins in the cytosol. This complex then targets to the endoplasmic reticulum by membrane-bound receptors GET1 and GET2, where the tail-anchored protein is released for insertion. This process is regulated by ATP binding and hydrolysis. ATP binding drives the homodimer towards the closed dimer state, facilitating recognition of newly synthesized TA membrane proteins. ATP hydrolysis is required for insertion. Subsequently, the homodimer reverts towards the open dimer state, lowering its affinity for the GET1-GET2 receptor, and returning it to the cytosol to initiate a new round of targeting. Cooperates with the HDEL receptor ERD2 to mediate the ATP-dependent retrieval of resident ER proteins that contain a C-terminal H-D-E-L retention signal from the Golgi to the ER. Involved in low-level resistance to the oxyanions arsenite and arsenate, and in heat tolerance. The sequence is that of ATPase GET3 from Zygosaccharomyces rouxii (strain ATCC 2623 / CBS 732 / NBRC 1130 / NCYC 568 / NRRL Y-229).